Consider the following 115-residue polypeptide: uncharacterized protein (115 aa).

This is an uncharacterized protein from Human cytomegalovirus (strain AD169) (HHV-5).